The chain runs to 441 residues: Platelet-activating factor acetylhydrolase (441 aa).

An N-terminal signal peptide occupies residues 1-21 (MVPPKLHVLFCLCGCLAVVYP). Ser273 (nucleophile) is an active-site residue. Active-site charge relay system residues include Asp296 and His351. N-linked (GlcNAc...) asparagine glycosylation is found at Asn423 and Asn433.

It belongs to the AB hydrolase superfamily. Lipase family. In terms of processing, N-glycosylated. Macrophage-derived PLA2G7 carries sialylated complex-type N-glycans that hinder its binding to HDL particles. In terms of tissue distribution, plasma. Secreted by macrophages (at protein level).

The protein localises to the secreted. The protein resides in the extracellular space. It carries out the reaction a 1-O-alkyl-2-acetyl-sn-glycero-3-phosphocholine + H2O = a 1-O-alkyl-sn-glycero-3-phosphocholine + acetate + H(+). The enzyme catalyses 1-O-decyl-2-acetyl-sn-glycero-3-phosphocholine + H2O = 1-O-decyl-sn-glycero-3-phosphocholine + acetate + H(+). It catalyses the reaction 1-O-dodecyl-2-acetyl-sn-glycero-3-phosphocholine + H2O = 1-O-dodecyl-sn-glycero-3-phosphocholine + acetate + H(+). The catalysed reaction is 1-O-tetradecyl-2-acetyl-sn-glycero-3-phosphocholine + H2O = 1-O-tetradecyl-sn-glycero-3-phosphocholine + acetate + H(+). It carries out the reaction 1-O-hexadecyl-2-acetyl-sn-glycero-3-phosphocholine + H2O = 1-O-hexadecyl-sn-glycero-3-phosphocholine + acetate + H(+). The enzyme catalyses 1-O-octadecyl-2-acetyl-sn-glycero-3-phosphocholine + H2O = 1-O-octadecyl-sn-glycero-3-phosphocholine + acetate + H(+). It catalyses the reaction 1-hexadecanoyl-2-acetyl-sn-glycero-3-phosphocholine + H2O = 1-hexadecanoyl-sn-glycero-3-phosphocholine + acetate + H(+). The catalysed reaction is 1-hexadecanoyl-2-propionyl-sn-glycero-3-phosphocholine + H2O = propanoate + 1-hexadecanoyl-sn-glycero-3-phosphocholine + H(+). It carries out the reaction 1-hexadecanoyl-2-butanoyl-sn-glycero-3-phosphocholine + H2O = butanoate + 1-hexadecanoyl-sn-glycero-3-phosphocholine + H(+). The enzyme catalyses 1-hexadecanoyl-2-pentanoyl-sn-glycero-3-phosphocholine + H2O = pentanoate + 1-hexadecanoyl-sn-glycero-3-phosphocholine + H(+). It catalyses the reaction 1-hexadecanoyl-2-glutaroyl-sn-glycero-3-phosphocholine + H2O = glutarate + 1-hexadecanoyl-sn-glycero-3-phosphocholine + H(+). The catalysed reaction is 1-hexadecanoyl-2-(5-oxopentanoyl)-sn-glycero-3-phosphocholine + H2O = 5-oxopentanoate + 1-hexadecanoyl-sn-glycero-3-phosphocholine + H(+). It carries out the reaction 1-hexadecanoyl-2-(9-oxononanoyl)-sn-glycero-3-phosphocholine + H2O = 9-oxononanoate + 1-hexadecanoyl-sn-glycero-3-phosphocholine + H(+). The enzyme catalyses 1-hexadecanoyl-2-[9-hydroperoxy-(10E-octadecenoyl)]-sn-glycero-3-phosphocholine + H2O = 9-hydroperoxy-10E-octadecenoate + 1-hexadecanoyl-sn-glycero-3-phosphocholine + H(+). It catalyses the reaction 1-hexadecanoyl-2-(10-hydroperoxy-8E-octadecenoyl)-sn-glycero-3-phosphocholine + H2O = 10-hydroperoxy-(8E)-octadecenoate + 1-hexadecanoyl-sn-glycero-3-phosphocholine + H(+). Functionally, lipoprotein-associated calcium-independent phospholipase A2 involved in phospholipid catabolism during inflammatory and oxidative stress response. At the lipid-aqueous interface, hydrolyzes the ester bond of fatty acyl group attached at sn-2 position of phospholipids (phospholipase A2 activity). Specifically targets phospholipids with a short-chain fatty acyl group at sn-2 position. Can hydrolyze phospholipids with long fatty acyl chains, only if they carry oxidized functional groups. Hydrolyzes and inactivates platelet-activating factor (PAF, 1-O-alkyl-2-acetyl-sn-glycero-3-phosphocholine), a potent pro-inflammatory signaling lipid that acts through PTAFR on various innate immune cells. Hydrolyzes oxidatively truncated phospholipids carrying an aldehyde group at omega position, preventing their accumulation in low-density lipoprotein (LDL) particles and uncontrolled pro-inflammatory effects. As part of high-density lipoprotein (HDL) particles, can hydrolyze phospholipids having long-chain fatty acyl hydroperoxides at sn-2 position and protect against potential accumulation of these oxylipins in the vascular wall. Catalyzes the release from membrane phospholipids of F2-isoprostanes, lipid biomarkers of cellular oxidative damage. This chain is Platelet-activating factor acetylhydrolase (PLA2G7), found in Homo sapiens (Human).